The chain runs to 82 residues: ATP synthase subunit c (82 aa).

2 helical membrane-spanning segments follow: residues 7–27 (AASV…PGIG) and 57–77 (LAFM…LLFA).

It belongs to the ATPase C chain family. In terms of assembly, F-type ATPases have 2 components, F(1) - the catalytic core - and F(0) - the membrane proton channel. F(1) has five subunits: alpha(3), beta(3), gamma(1), delta(1), epsilon(1). F(0) has four main subunits: a(1), b(1), b'(1) and c(10-14). The alpha and beta chains form an alternating ring which encloses part of the gamma chain. F(1) is attached to F(0) by a central stalk formed by the gamma and epsilon chains, while a peripheral stalk is formed by the delta, b and b' chains.

The protein resides in the cellular thylakoid membrane. F(1)F(0) ATP synthase produces ATP from ADP in the presence of a proton or sodium gradient. F-type ATPases consist of two structural domains, F(1) containing the extramembraneous catalytic core and F(0) containing the membrane proton channel, linked together by a central stalk and a peripheral stalk. During catalysis, ATP synthesis in the catalytic domain of F(1) is coupled via a rotary mechanism of the central stalk subunits to proton translocation. Functionally, key component of the F(0) channel; it plays a direct role in translocation across the membrane. A homomeric c-ring of between 10-14 subunits forms the central stalk rotor element with the F(1) delta and epsilon subunits. In Synechococcus sp. (strain RCC307), this protein is ATP synthase subunit c.